The following is a 912-amino-acid chain: Protein translocase subunit SecA (912 aa).

ATP-binding positions include Gln-87, 105-109, and Asp-499; that span reads GEGKT. Residues Cys-897, Cys-899, Cys-908, and His-909 each coordinate Zn(2+).

The protein belongs to the SecA family. As to quaternary structure, monomer and homodimer. Part of the essential Sec protein translocation apparatus which comprises SecA, SecYEG and auxiliary proteins SecDF-YajC and YidC. Zn(2+) is required as a cofactor.

It is found in the cell inner membrane. It localises to the cytoplasm. The catalysed reaction is ATP + H2O + cellular proteinSide 1 = ADP + phosphate + cellular proteinSide 2.. In terms of biological role, part of the Sec protein translocase complex. Interacts with the SecYEG preprotein conducting channel. Has a central role in coupling the hydrolysis of ATP to the transfer of proteins into and across the cell membrane, serving both as a receptor for the preprotein-SecB complex and as an ATP-driven molecular motor driving the stepwise translocation of polypeptide chains across the membrane. The sequence is that of Protein translocase subunit SecA from Rhizorhabdus wittichii (strain DSM 6014 / CCUG 31198 / JCM 15750 / NBRC 105917 / EY 4224 / RW1) (Sphingomonas wittichii).